Here is a 93-residue protein sequence, read N- to C-terminus: Phosphoribosyl-ATP pyrophosphatase (93 aa).

It belongs to the PRA-PH family.

The protein resides in the cytoplasm. It catalyses the reaction 1-(5-phospho-beta-D-ribosyl)-ATP + H2O = 1-(5-phospho-beta-D-ribosyl)-5'-AMP + diphosphate + H(+). The protein operates within amino-acid biosynthesis; L-histidine biosynthesis; L-histidine from 5-phospho-alpha-D-ribose 1-diphosphate: step 2/9. The sequence is that of Phosphoribosyl-ATP pyrophosphatase from Rhodococcus erythropolis (strain PR4 / NBRC 100887).